The sequence spans 121 residues: MSITKDQILEAVAAMSVMDVVELVSAMEEKFGVSAAAAVAVAAGPAEVAEEKTEFDVVLKGIGANKVAVIKAVRGATGLGLKEAKDLVESAPAVLKEGVSKDDAEALKKSLEEAGAEVEVK.

Belongs to the bacterial ribosomal protein bL12 family. Homodimer. Part of the ribosomal stalk of the 50S ribosomal subunit. Forms a multimeric L10(L12)X complex, where L10 forms an elongated spine to which 2 to 4 L12 dimers bind in a sequential fashion. Binds GTP-bound translation factors.

Its function is as follows. Forms part of the ribosomal stalk which helps the ribosome interact with GTP-bound translation factors. Is thus essential for accurate translation. The sequence is that of Large ribosomal subunit protein bL12 from Pectobacterium carotovorum subsp. carotovorum (strain PC1).